The primary structure comprises 1545 residues: MLCIRPEALVLLGALLTVPLDPVGGQDALSLTWEVQRYDGWFNNLRQHEHGAAGSPLRRLVPANYADGVYQALGEPLLPNPRQLSHTTMRGPAGLRSIRNRTVLGVFFGYHVLSDLVSIEKPGCPAEFLNIHIPPGDPVFDPHKSGDVVLPFQRSRWDPNTGQSPSNPRDLTNEVTGWLDGSAIYGSSHSWSDELRSFSGGQLASGPDPAFPRQAQDPLFMWTPPDPATGQRGPQGLYAFGAEQGNREPFLQALGLLWFRYHNLCAQKLAREHPLWGDEELFQHARKRVIATYQSITMYEWLPSFLQQTPPNYTEYRPFLDPSISPEFLAASEQFFSTMVPPGVYMRNASCHFQMVLNESYGSFPALRVCNSYWIRENPNLNSAEAVNQLLLGMASQISELEDWIVVEDLRDYWPGPGKFSRTDYVASSIQRGRDMGLPSYTQALQALGLNTPKNWSDFNPNVDPQVLEATAALYNQDLSRLELFSGGLLESYGDPGPLFSTIVLDQFVRLRDGDRYWFENTKNGLFSKEEIAEIRSTTLRDVLVAVTNVSSSALQPNVFIWNEDSPCPQPQQLTTEDLPHCVPLTVIQYFEGSGPGFGITIVALCCLPLMSLLISGVVAYFRSRERKKLQKRGKESVKKEADKDGVSAMEWPGPKERSYPVSIQLLPDRHLQVLDRHLSVLRTIQLRPRHRVNLILSNNLGRRTLLLKIPKEYDLVLLFNSEDERGAFVQHLQGFCASCALGLDIDEMGESELFRKAVTKQQRGRILEIFFRHLFAQVLDIDQADAGALPLDSSQKVREALTCELSRAEFAESLGLKPQDMFVESMFSLADKDGNGYLSFREFLDVLVVFMKGSPEDKSRLMFTMYDLDGNGFLSKDEFFTMIRSFIEISNNCLSKAQLTEVVESMFREAGFQDKQELTWEDFHFMLRDHDSELRHTQLCVKGGGGGVGVIFKPDISSRVSFIIRTPEERSSPQGVRLPASEASELGGPVLKKRFGKKAVVPPPRLYTEALQEKKQRGFLAQKLQQYKRFVENYRRHIVCVAIFSAICAGLFVERAYYYAFVSPPSGIAETTFVGIILSRGTAASVSFMFSYILLTMCRNLITFLRETFLNHYVPFDAAVDFHRWIAMAALVLAILHSVGHVVNVYIFSVSPLSLLACVFPSVFVNDGSKLPQKFYWWFFQTIPGMTGVLLLVVLAIMYVFASPYFRRRSFRGFWLTHHFYILLYVLLIIHGSFALIQLPRFHIFFLVPALIYVGDKLVSLSRKKVEISVVKAELLPSGVTHLQFQRPQGFEYKSGQWVRIACLGLGTNEYHPFTLTSAPHEDTLSLHIRAVGPWTTRLREIYSHPMGDGYARYPKLYLDGPFGEGHQEWHKFEVSVLVGGGIGVTPFASILKDLVFKSSLGSQMLCKKIYFIWVTRTQRQFEWLADIIREVEENDHRDLVSVHIYITQLAEKFDLRTTMLYICERHFQKVLNRSLFTGLRSITHFGRPPFEPFFNSLQEVHPQVRKIGVFSCGPPGMTKNVEKTCQLINRQDQTHFVHHYENF.

The N-terminal stretch at Met-1–Gly-25 is a signal peptide. The Extracellular segment spans residues Gln-26–Thr-601. Residues Ser-30–Pro-596 form a peroxidase-like; mediates peroxidase activity region. 6 N-linked (GlcNAc...) asparagine glycosylation sites follow: Asn-100, Asn-312, Asn-348, Asn-358, Asn-455, and Asn-549. A disulfide bridge connects residues Cys-124 and Cys-1159. A helical transmembrane segment spans residues Ile-602–Phe-622. At Arg-623 to Arg-1037 the chain is on the cytoplasmic side. 3 consecutive EF-hand domains span residues Pro-819–Gly-854, Ser-855–Ile-890, and Gln-899–Glu-934. Positions 832, 834, 836, 838, 843, 868, 870, 872, and 879 each coordinate Ca(2+). An interaction with TXNDC11 region spans residues Arg-960–Arg-1242. A helical membrane pass occupies residues His-1038–Tyr-1058. Over Tyr-1059 to Phe-1074 the chain is Extracellular. Residues Val-1075–Thr-1097 traverse the membrane as a helical segment. Residues Arg-1081–Ser-1263 form the Ferric oxidoreductase domain. At Met-1098–Arg-1125 the chain is on the cytoplasmic side. Residues Trp-1126–Ile-1148 traverse the membrane as a helical segment. The Extracellular portion of the chain corresponds to Phe-1149 to Gln-1182. Residues Thr-1183–Ala-1203 traverse the membrane as a helical segment. Residues Ser-1204–His-1220 lie on the Cytoplasmic side of the membrane. A helical membrane pass occupies residues Phe-1221–Pro-1241. Arg-1242 is a topological domain (extracellular). Residues Phe-1243–Ser-1263 form a helical membrane-spanning segment. Residues Arg-1264–Glu-1370 enclose the FAD-binding FR-type domain. Residues Arg-1264–Phe-1545 are Cytoplasmic-facing.

It in the N-terminal section; belongs to the peroxidase family. As to quaternary structure, heterodimer with DUOXA2; disulfide-linked. Interacts with TXNDC11, TPO and CYBA. In terms of processing, N-glycosylated. As to expression, expressed in thyroid, and the digestive tract especially in stomach, cecum and sigmoidal colon (at protein level). Expressed in thyroid.

Its subcellular location is the apical cell membrane. The protein localises to the cell junction. It carries out the reaction NADH + O2 + H(+) = H2O2 + NAD(+). The enzyme catalyses NADPH + O2 + H(+) = H2O2 + NADP(+). It participates in hormone biosynthesis; thyroid hormone biosynthesis. Its activity is regulated as follows. The NADPH oxidase activity is calcium-dependent. Peroxidase activity is inhibited by aminobenzohydrazide. In terms of biological role, generates hydrogen peroxide which is required for the activity of thyroid peroxidase/TPO and lactoperoxidase/LPO. Plays a role in thyroid hormones synthesis and lactoperoxidase-mediated antimicrobial defense at the surface of mucosa. May have its own peroxidase activity through its N-terminal peroxidase-like domain. The chain is Dual oxidase 2 (DUOX2) from Sus scrofa (Pig).